Reading from the N-terminus, the 1015-residue chain is Translation initiation factor IF-2 (1015 aa).

Disordered stretches follow at residues 124–144 (EKEPVKEEPKPQPVAAEEKKV), 159–179 (EVTVTPATSEPKPVKEEPKPV), 196–230 (KKEEPKVVVSPEKTEKKEEKPVAEAPVTPVEKEEE), and 250–386 (IDLA…VSEE). Composition is skewed to basic and acidic residues over residues 196–217 (KKEEPKVVVSPEKTEKKEEKPV) and 265–315 (SKEE…DPNG). The region spanning 514–684 (HRAPIVTVMG…LLEAEMLDLK (171 aa)) is the tr-type G domain. The tract at residues 523–530 (GHVDHGKT) is G1. 523 to 530 (GHVDHGKT) contacts GTP. The G2 stretch occupies residues 548 to 552 (GITQH). The tract at residues 570–573 (DTPG) is G3. Residues 570 to 574 (DTPGH) and 624 to 627 (NKID) contribute to the GTP site. Positions 624-627 (NKID) are G4. The interval 660–662 (SAK) is G5.

Belongs to the TRAFAC class translation factor GTPase superfamily. Classic translation factor GTPase family. IF-2 subfamily.

It localises to the cytoplasm. Functionally, one of the essential components for the initiation of protein synthesis. Protects formylmethionyl-tRNA from spontaneous hydrolysis and promotes its binding to the 30S ribosomal subunits. Also involved in the hydrolysis of GTP during the formation of the 70S ribosomal complex. The sequence is that of Translation initiation factor IF-2 from Bacteroides fragilis (strain ATCC 25285 / DSM 2151 / CCUG 4856 / JCM 11019 / LMG 10263 / NCTC 9343 / Onslow / VPI 2553 / EN-2).